The sequence spans 177 residues: MKLPKEGDFITIQSYKHDGRLHRTWRDTMVLKTTENAVIGVNDHTLVTEADGRRWVTREPAIVYFHKKYWFNIIAMIRDNGISYYCNLASPYVLDQEALKYIDYDLDVKVFADGEKKLLDVDEYEIHKKEMHYSPDIDYILKEHVKILVDWINNGKGPFSQSYVNIWYKRYLELRSR.

Arg23 functions as the Proton donor in the catalytic mechanism. Mg(2+)-binding residues include Asn87, Asp103, Asp105, Asp107, Asp120, and Glu123.

The protein belongs to the Ntdp family. Requires Mg(2+) as cofactor.

It catalyses the reaction a ribonucleoside 5'-triphosphate + H2O = a ribonucleoside 5'-diphosphate + phosphate + H(+). The enzyme catalyses a ribonucleoside 5'-diphosphate + H2O = a ribonucleoside 5'-phosphate + phosphate + H(+). Functionally, has nucleoside phosphatase activity towards nucleoside triphosphates and nucleoside diphosphates. In Streptococcus thermophilus (strain ATCC BAA-491 / LMD-9), this protein is Nucleoside triphosphate/diphosphate phosphatase.